Here is a 443-residue protein sequence, read N- to C-terminus: Serine transporter (443 aa).

11 helical membrane passes run 38–60 (TGWV…PVQV), 65–87 (LWVF…RLFI), 111–131 (WGIL…FVYS), 150–170 (GLLS…VAIS), 183–203 (GMVL…VGMW), 215–235 (GLLV…ILFI), 265–285 (IAFG…TLAM), 319–339 (VSVI…YLGF), 368–388 (GIMI…APVL), 390–410 (FTSI…AWLV), and 422–442 (MSLY…FLAF).

This sequence belongs to the amino acid/polyamine transporter 2 family. SdaC/TdcC subfamily.

It localises to the cell inner membrane. In terms of biological role, transports both D- and L-serine; allows growth of strain CFT073 cells normally unable to transport D-serine on that substrate. Transport relies on the H(+) gradient and is not competed by L-threonine. May play a role in L-cysteine detoxification. This is Serine transporter from Escherichia coli O157:H7.